The sequence spans 557 residues: Interferon alpha/beta receptor 1 (557 aa).

The first 27 residues, 1–27, serve as a signal peptide directing secretion; it reads MMVVLLGATTLVLVAVAPWVLSAAAGG. At 28-436 the chain is on the extracellular side; that stretch reads KNLKSPQKVE…EKTKPGNTSK (409 aa). Fibronectin type-III domains follow at residues 32–126, 127–227, 231–329, and 331–432; these read SPQK…FRKA, QIGP…TVEN, PPEN…TEIQ, and FLLP…TKPG. Asn-50, Asn-58, Asn-81, Asn-88, Asn-110, and Asn-172 each carry an N-linked (GlcNAc...) asparagine glycan. Cys-79 and Cys-87 are disulfide-bonded. Cys-199 and Cys-220 are oxidised to a cystine. The N-linked (GlcNAc...) asparagine glycan is linked to Asn-254. A disulfide bridge connects residues Cys-283 and Cys-291. 5 N-linked (GlcNAc...) asparagine glycosylation sites follow: Asn-313, Asn-314, Asn-376, Asn-416, and Asn-433. The cysteines at positions 403 and 426 are disulfide-linked. Residues 437–457 form a helical membrane-spanning segment; sequence IWLIVGICIALFALPFVIYAA. Residues 458–557 lie on the Cytoplasmic side of the membrane; sequence KVFLRCINYV…TSEELQQDFV (100 aa). Cys-463 carries the S-palmitoyl cysteine lipid modification. A phosphotyrosine; by TYK2 mark is found at Tyr-466 and Tyr-481. An important for interaction with TYK2 region spans residues 491–500; it reads LLSTSEEQIE. Ser-495 is modified (phosphoserine). Glycyl lysine isopeptide (Lys-Gly) (interchain with G-Cter in ubiquitin) cross-links involve residues Lys-501, Lys-525, and Lys-526. Residues 516–557 are disordered; the sequence is ETNQTDEDHKKYSSQTSQDSGNYSNEDESESKTSEELQQDFV. Residues 528–539 show a composition bias toward polar residues; it reads SSQTSQDSGNYS. Ser-535 carries the post-translational modification Phosphoserine.

Belongs to the type II cytokine receptor family. As to quaternary structure, heterodimer with IFNAR2; forming the receptor for type I interferon. Interacts with TYK2. Interacts with STAT1 and STAT2; the interaction requires its phosphorylation at Tyr-466. Interacts (serine-phosphorylated form) with FBXW11, the substrate recognition component of a SCF (SKP1-CUL1-F-box protein) E3 ubiquitin-protein ligase complex. Interacts with SHMT2; this promotes interaction with ABRAXAS2 and the BRISC complex. Interacts with TRIM10; this interaction prevents association between IFNAR1 and TYK2. In terms of processing, ubiquitinated, leading to its internalization and degradation. Polyubiquitinated via 'Lys-48'-linked and 'Lys-63'-linked ubiquitin chains, leading to receptor internalization and lysosomal degradation. The 'Lys-63'-linked ubiquitin chains are cleaved off by the BRISC complex. Post-translationally, phosphorylated on tyrosine residues in response to interferon-binding: phosphorylation by TYK2 tyrosine kinase creates docking sites for STAT proteins. Phosphorylated on serine residues in response to interferon binding; this promotes interaction with FBXW11 and ubiquitination. Palmitoylation at Cys-463 is required for the activation of STAT1 and STAT2. In terms of tissue distribution, IFN receptors are present in all tissues and even on the surface of most IFN-resistant cells. Isoform 1, isoform 2 and isoform 3 are expressed in the IFN-alpha sensitive myeloma cell line U266B1. Isoform 2 and isoform 3 are expressed in the IFN-alpha resistant myeloma cell line U266R. Isoform 1 is not expressed in IFN-alpha resistant myeloma cell line U266R.

It is found in the cell membrane. Its subcellular location is the late endosome. The protein localises to the lysosome. Functionally, together with IFNAR2, forms the heterodimeric receptor for type I interferons (including interferons alpha, beta, epsilon, omega and kappa). Type I interferon binding activates the JAK-STAT signaling cascade, resulting in transcriptional activation or repression of interferon-regulated genes that encode the effectors of the interferon response. Mechanistically, type I interferon-binding brings the IFNAR1 and IFNAR2 subunits into close proximity with one another, driving their associated Janus kinases (JAKs) (TYK2 bound to IFNAR1 and JAK1 bound to IFNAR2) to cross-phosphorylate one another. The activated kinases phosphorylate specific tyrosine residues on the intracellular domains of IFNAR1 and IFNAR2, forming docking sites for the STAT transcription factors. STAT proteins are then phosphorylated by the JAKs, promoting their translocation into the nucleus to regulate expression of interferon-regulated genes. Can also act independently of IFNAR2: form an active IFNB1 receptor by itself and activate a signaling cascade that does not involve activation of the JAK-STAT pathway. The sequence is that of Interferon alpha/beta receptor 1 (IFNAR1) from Homo sapiens (Human).